The chain runs to 711 residues: MND1-interacting protein 1 (711 aa).

The stretch at 390-648 (EWAQKNAMQA…LEGSYDNEAN (259 aa)) forms a coiled coil. Disordered regions lie at residues 552-571 (EALA…EGHN) and 602-622 (RLKA…WKPK). Residues 602–611 (RLKASSDSDS) are compositionally biased toward basic and acidic residues. An RING-type zinc finger spans residues 653–697 (CIICMKDEVSVVFLPCAHQVVCGSCSDSFFASNNGGSKVTCPCCR).

In terms of assembly, interacts (via C-terminal domain) with MND1 and HOP2. Interacts with XRI1 (via C-terminal domain).

The chain is MND1-interacting protein 1 (MIP1) from Arabidopsis thaliana (Mouse-ear cress).